A 392-amino-acid polypeptide reads, in one-letter code: 8-amino-7-oxononanoate synthase (392 aa).

R21 serves as a coordination point for substrate. Residue 114–115 (GY) participates in pyridoxal 5'-phosphate binding. H139 is a binding site for substrate. Pyridoxal 5'-phosphate contacts are provided by residues S187, 212 to 215 (DEAH), and 243 to 246 (TFGK). K246 carries the post-translational modification N6-(pyridoxal phosphate)lysine. Residue T359 participates in substrate binding.

This sequence belongs to the class-II pyridoxal-phosphate-dependent aminotransferase family. BioF subfamily. In terms of assembly, homodimer. The cofactor is pyridoxal 5'-phosphate.

The enzyme catalyses 6-carboxyhexanoyl-[ACP] + L-alanine + H(+) = (8S)-8-amino-7-oxononanoate + holo-[ACP] + CO2. It participates in cofactor biosynthesis; biotin biosynthesis. Catalyzes the decarboxylative condensation of pimeloyl-[acyl-carrier protein] and L-alanine to produce 8-amino-7-oxononanoate (AON), [acyl-carrier protein], and carbon dioxide. The sequence is that of 8-amino-7-oxononanoate synthase from Chlorobaculum parvum (strain DSM 263 / NCIMB 8327) (Chlorobium vibrioforme subsp. thiosulfatophilum).